A 152-amino-acid chain; its full sequence is Deoxyuridine 5'-triphosphate nucleotidohydrolase (152 aa).

Substrate contacts are provided by residues Arg-71–Gly-73, Asn-84, Leu-88–Asp-90, and Met-98.

This sequence belongs to the dUTPase family. The cofactor is Mg(2+).

The enzyme catalyses dUTP + H2O = dUMP + diphosphate + H(+). It functions in the pathway pyrimidine metabolism; dUMP biosynthesis; dUMP from dCTP (dUTP route): step 2/2. Its function is as follows. This enzyme is involved in nucleotide metabolism: it produces dUMP, the immediate precursor of thymidine nucleotides and it decreases the intracellular concentration of dUTP so that uracil cannot be incorporated into DNA. This Aeromonas salmonicida (strain A449) protein is Deoxyuridine 5'-triphosphate nucleotidohydrolase.